Consider the following 619-residue polypeptide: Dihydroxy-acid dehydratase (619 aa).

Residue Asp81 participates in Mg(2+) binding. A [2Fe-2S] cluster-binding site is contributed by Cys122. The Mg(2+) site is built by Asp123 and Lys124. Residue Lys124 is modified to N6-carboxylysine. Cys195 lines the [2Fe-2S] cluster pocket. Mg(2+) is bound at residue Glu494. Ser520 functions as the Proton acceptor in the catalytic mechanism.

It belongs to the IlvD/Edd family. As to quaternary structure, homodimer. [2Fe-2S] cluster is required as a cofactor. Mg(2+) serves as cofactor.

The catalysed reaction is (2R)-2,3-dihydroxy-3-methylbutanoate = 3-methyl-2-oxobutanoate + H2O. It carries out the reaction (2R,3R)-2,3-dihydroxy-3-methylpentanoate = (S)-3-methyl-2-oxopentanoate + H2O. The protein operates within amino-acid biosynthesis; L-isoleucine biosynthesis; L-isoleucine from 2-oxobutanoate: step 3/4. It functions in the pathway amino-acid biosynthesis; L-valine biosynthesis; L-valine from pyruvate: step 3/4. In terms of biological role, functions in the biosynthesis of branched-chain amino acids. Catalyzes the dehydration of (2R,3R)-2,3-dihydroxy-3-methylpentanoate (2,3-dihydroxy-3-methylvalerate) into 2-oxo-3-methylpentanoate (2-oxo-3-methylvalerate) and of (2R)-2,3-dihydroxy-3-methylbutanoate (2,3-dihydroxyisovalerate) into 2-oxo-3-methylbutanoate (2-oxoisovalerate), the penultimate precursor to L-isoleucine and L-valine, respectively. This is Dihydroxy-acid dehydratase from Shewanella putrefaciens (strain CN-32 / ATCC BAA-453).